A 358-amino-acid polypeptide reads, in one-letter code: Ganglioside-induced differentiation-associated protein 1 (358 aa).

The 82-residue stretch at Val-24–Arg-105 folds into the GST N-terminal domain. Glycyl lysine isopeptide (Lys-Gly) (interchain with G-Cter in ubiquitin) cross-links involve residues Lys-50, Lys-172, Lys-173, Lys-188, and Lys-190. In terms of domain architecture, GST C-terminal spans Pro-153–Phe-309. Position 203 is an N6-acetyllysine; alternate (Lys-203). A Glycyl lysine isopeptide (Lys-Gly) (interchain with G-Cter in ubiquitin); alternate cross-link involves residue Lys-203. Glycyl lysine isopeptide (Lys-Gly) (interchain with G-Cter in ubiquitin) cross-links involve residues Lys-206, Lys-207, and Lys-214. 2 helical membrane-spanning segments follow: residues Val-292 to Ala-312 and Leu-320 to Phe-340. The tract at residues Leu-320–Phe-358 is required for mitochondrial localization.

Belongs to the GST superfamily. As to quaternary structure, homodimer. Ubiquitinated by PRKN during mitophagy, leading to its degradation and enhancement of mitophagy. Deubiquitinated by USP30. As to expression, expressed in brain, spinal cord, muscles and intestinal villi. In the central nervous system expressed most prominently in the cortex, cerebellum, thalamus, olfactory bulb, and spinal cord. Expressed also in sciatic nerves and in dorsal root ganglia.

It is found in the mitochondrion outer membrane. The protein resides in the cytoplasm. Functionally, regulates the mitochondrial network by promoting mitochondrial fission. The sequence is that of Ganglioside-induced differentiation-associated protein 1 (Gdap1) from Mus musculus (Mouse).